We begin with the raw amino-acid sequence, 272 residues long: F-box protein PP2-B10 (272 aa).

One can recognise an F-box domain in the interval 11–57 (SSPFDSFPEDCISYIISFTNPRDACVAATVSKTFESTVKSDIIWEKF).

In terms of assembly, part of a SCF (ASK-cullin-F-box) protein ligase complex. Interacts with SKP1B/ASK2, ASK11 and ASK12.

It participates in protein modification; protein ubiquitination. Component of SCF(ASK-cullin-F-box) E3 ubiquitin ligase complexes, which may mediate the ubiquitination and subsequent proteasomal degradation of target proteins. The polypeptide is F-box protein PP2-B10 (PP2B10) (Arabidopsis thaliana (Mouse-ear cress)).